The sequence spans 345 residues: N-acetyl-gamma-glutamyl-phosphate reductase (345 aa).

C149 is a catalytic residue.

Belongs to the NAGSA dehydrogenase family. Type 1 subfamily.

Its subcellular location is the cytoplasm. The enzyme catalyses N-acetyl-L-glutamate 5-semialdehyde + phosphate + NADP(+) = N-acetyl-L-glutamyl 5-phosphate + NADPH + H(+). It functions in the pathway amino-acid biosynthesis; L-arginine biosynthesis; N(2)-acetyl-L-ornithine from L-glutamate: step 3/4. Catalyzes the NADPH-dependent reduction of N-acetyl-5-glutamyl phosphate to yield N-acetyl-L-glutamate 5-semialdehyde. The chain is N-acetyl-gamma-glutamyl-phosphate reductase from Bacillus cereus (strain 03BB102).